A 645-amino-acid chain; its full sequence is DNA ligase (645 aa).

Residues 30-34 (DAEFD) and 72-73 (SQ) contribute to the NAD(+) site. The active-site N6-AMP-lysine intermediate is lysine 99. NAD(+) contacts are provided by arginine 120, glutamate 163, lysine 275, and lysine 296. Residues cysteine 387, cysteine 390, cysteine 403, and cysteine 408 each contribute to the Zn(2+) site. Positions 564-645 (EEGAVLKGLS…EAFLNLIGKV (82 aa)) constitute a BRCT domain.

The protein belongs to the NAD-dependent DNA ligase family. LigA subfamily. The cofactor is Mg(2+). Mn(2+) serves as cofactor.

It carries out the reaction NAD(+) + (deoxyribonucleotide)n-3'-hydroxyl + 5'-phospho-(deoxyribonucleotide)m = (deoxyribonucleotide)n+m + AMP + beta-nicotinamide D-nucleotide.. DNA ligase that catalyzes the formation of phosphodiester linkages between 5'-phosphoryl and 3'-hydroxyl groups in double-stranded DNA using NAD as a coenzyme and as the energy source for the reaction. It is essential for DNA replication and repair of damaged DNA. This Treponema denticola (strain ATCC 35405 / DSM 14222 / CIP 103919 / JCM 8153 / KCTC 15104) protein is DNA ligase.